The sequence spans 344 residues: Flavonoid 7-O-methyltransferase 1A (344 aa).

Asp211 contributes to the S-adenosyl-L-methionine binding site. His249 serves as the catalytic Proton acceptor.

This sequence belongs to the class I-like SAM-binding methyltransferase superfamily. Cation-independent O-methyltransferase family. In terms of assembly, homodimer.

The catalysed reaction is apigenin + S-adenosyl-L-methionine = genkwanin + S-adenosyl-L-homocysteine + H(+). The enzyme catalyses luteolin + S-adenosyl-L-methionine = luteolin 7-methyl ether + S-adenosyl-L-homocysteine + H(+). It carries out the reaction quercetin + S-adenosyl-L-methionine = rhamnetin + S-adenosyl-L-homocysteine + H(+). It catalyses the reaction (2S)-naringenin + S-adenosyl-L-methionine = (2S)-sakuranetin + S-adenosyl-L-homocysteine + H(+). The catalysed reaction is kaempferol + S-adenosyl-L-methionine = kaempferol 7-methyl ether + S-adenosyl-L-homocysteine + H(+). The enzyme catalyses isorhamnetin + S-adenosyl-L-methionine = rhamnacene + S-adenosyl-L-homocysteine + H(+). It carries out the reaction 4',7,8-trihydroxyflavone + S-adenosyl-L-methionine = 4',8-dihydroxy-7-methoxyflavone + S-adenosyl-L-homocysteine. It catalyses the reaction scutellarein + S-adenosyl-L-methionine = scutellarein 7-methyl ether + S-adenosyl-L-homocysteine. It participates in flavonoid metabolism. Its function is as follows. Flavonoid 7-O-methyltransferase involved in the biosynthesis of polymethoxylated flavonoids natural products such as pebrellin, aroma compounds which contribute to the flavor of peppermint, and exhibit pharmacological activities such as anti-allergic, anti-oxidant, antibacterial, anti-proliferative, and anti-inflammatory effects. Catalyzes S-adenosylmethionine-dependent regioselective 7-O-methylation of flavonoids; active on various hydroxylated flavonoid substrates, including luteolin (LUT), quercetin, kaempferol, isorhamnetin, apigenin (API), scutellarein (6-hydroxy-apigenin, 6-OH-API, SCU), 7,8,4'-trihydroxy-flavone and naringenin (NAR), and, with a lower efficiency, 7,8,3',4'-tetrahydroxy-flavone, taxifolin, hesperetin and genistein. This Mentha piperita (Peppermint) protein is Flavonoid 7-O-methyltransferase 1A.